Here is a 94-residue protein sequence, read N- to C-terminus: Aspartyl/glutamyl-tRNA(Asn/Gln) amidotransferase subunit C (94 aa).

This sequence belongs to the GatC family. Heterotrimer of A, B and C subunits.

The enzyme catalyses L-glutamyl-tRNA(Gln) + L-glutamine + ATP + H2O = L-glutaminyl-tRNA(Gln) + L-glutamate + ADP + phosphate + H(+). The catalysed reaction is L-aspartyl-tRNA(Asn) + L-glutamine + ATP + H2O = L-asparaginyl-tRNA(Asn) + L-glutamate + ADP + phosphate + 2 H(+). Allows the formation of correctly charged Asn-tRNA(Asn) or Gln-tRNA(Gln) through the transamidation of misacylated Asp-tRNA(Asn) or Glu-tRNA(Gln) in organisms which lack either or both of asparaginyl-tRNA or glutaminyl-tRNA synthetases. The reaction takes place in the presence of glutamine and ATP through an activated phospho-Asp-tRNA(Asn) or phospho-Glu-tRNA(Gln). The protein is Aspartyl/glutamyl-tRNA(Asn/Gln) amidotransferase subunit C of Syntrophomonas wolfei subsp. wolfei (strain DSM 2245B / Goettingen).